The primary structure comprises 405 residues: Acetate kinase (405 aa).

Asparagine 13 is a binding site for Mg(2+). Position 20 (lysine 20) interacts with ATP. Residue arginine 94 coordinates substrate. Aspartate 153 acts as the Proton donor/acceptor in catalysis. Residues 213–217 (HLGNG), 288–290 (DFR), and 336–340 (GIGEN) each bind ATP. Glutamate 390 is a Mg(2+) binding site.

This sequence belongs to the acetokinase family. In terms of assembly, homodimer. Mg(2+) serves as cofactor. The cofactor is Mn(2+).

The protein localises to the cytoplasm. The enzyme catalyses acetate + ATP = acetyl phosphate + ADP. Its pathway is metabolic intermediate biosynthesis; acetyl-CoA biosynthesis; acetyl-CoA from acetate: step 1/2. Its function is as follows. Catalyzes the formation of acetyl phosphate from acetate and ATP. Can also catalyze the reverse reaction. This is Acetate kinase from Buchnera aphidicola subsp. Acyrthosiphon pisum (strain APS) (Acyrthosiphon pisum symbiotic bacterium).